Reading from the N-terminus, the 408-residue chain is uncharacterized protein (408 aa).

Residues 49–77 are disordered; the sequence is PRSSPEVQRKATAGENSEVGSPESSLSTS. The span at 62–77 shows a compositional bias: polar residues; the sequence is GENSEVGSPESSLSTS. In terms of domain architecture, F-box spans 124–170; that stretch reads SFEFMQLPDTDICQIMSFLDAQSLLNLSQTCSHLRQLCLAHEDNAGK.

This is an uncharacterized protein from Caenorhabditis elegans.